The sequence spans 640 residues: MTVDAAATPAEAPATNGHGDAHSTASFTALTLGSIGVVYGDIGTSPLYALREAVTAASSSGEAAPHAVMGVISLILWALIVVVTLKYVVILLRADNHGEGGTLALMALAQRGVTRGASIIVLLGIISGALFYGDAVITPALSVLSAIEGTKLVTAAFDPYVVPLTVIILAALFAVQARGTAKVAAFFGPIMLIWFLVIGIAAFPPILRHPEVLWAINPVNAVSFMLHHGIVGFITLGAVFLAVTGAEALYADLGHFGKRPIQTAWLFVVLPSLALNYLGQGALIIADAKALENPFFLMFPEWALIPMVALATVATVIASQAVITGAYSLTRQAIQLGLLPRFEIRHTSEAHSGQIYIPRINKLLLASVVLLVLLFKSSSALASAYGISVTGTMVVTAMMGFVVIWKVWRWSPLAAGALIAPFLFLDLTFLSANLLKVLEGGWVPLALGGFVMTLMYTWRRGSRLLFEKSRKLEFPLADLVAMLEKRPPQRVPGTAVFLTSDPLSAPTALMHSLKHYKVLHEKNVILTIETAPTPRIDPSERVRLEQISPTFSKVTLRFGFMESPNVPRALAIARKLGWQFDIMSTSFFLSRRALKPAAHSGMPRWQDHLFITMSRSANDATDYFQIPSGRVVEVGTQVTI.

Over residues 1–15 (MTVDAAATPAEAPAT) the composition is skewed to low complexity. Residues 1–20 (MTVDAAATPAEAPATNGHGD) form a disordered region. Helical transmembrane passes span 30 to 50 (LTLGSIGVVYGDIGTSPLYAL), 71 to 91 (VISLILWALIVVVTLKYVVIL), 117 to 137 (ASIIVLLGIISGALFYGDAVI), 155 to 175 (AAFDPYVVPLTVIILAALFAV), 183 to 203 (VAAFFGPIMLIWFLVIGIAAF), 224 to 244 (FMLHHGIVGFITLGAVFLAVT), 265 to 285 (WLFVVLPSLALNYLGQGALII), 294 to 314 (PFFLMFPEWALIPMVALATVA), 363 to 383 (LLLASVVLLVLLFKSSSALAS), 385 to 405 (YGISVTGTMVVTAMMGFVVIW), 410 to 430 (WSPLAAGALIAPFLFLDLTFL), and 437 to 457 (VLEGGWVPLALGGFVMTLMYT).

Belongs to the HAK/KUP transporter (TC 2.A.72) family.

Its subcellular location is the cell inner membrane. The enzyme catalyses K(+)(in) + H(+)(in) = K(+)(out) + H(+)(out). Transport of potassium into the cell. Likely operates as a K(+):H(+) symporter. The protein is Probable potassium transport system protein Kup 3 of Bradyrhizobium sp. (strain BTAi1 / ATCC BAA-1182).